The sequence spans 211 residues: Small ribosomal subunit protein uS3 (211 aa).

Residues 16–85 enclose the KH type-2 domain; sequence IDEYFKTKLV…NPQIEVKQVE (70 aa).

This sequence belongs to the universal ribosomal protein uS3 family. As to quaternary structure, part of the 30S ribosomal subunit.

In terms of biological role, binds the lower part of the 30S subunit head. The chain is Small ribosomal subunit protein uS3 from Methanococcus maripaludis (strain C5 / ATCC BAA-1333).